Here is a 101-residue protein sequence, read N- to C-terminus: uncharacterized protein (101 aa).

Residues 1 to 17 form the signal peptide; that stretch reads MKKAAVLAVVLSLGLAG. A lipid anchor (N-palmitoyl cysteine) is attached at Cys-18. Cys-18 carries the S-diacylglycerol cysteine lipid modification.

The protein resides in the cell membrane. This is an uncharacterized protein from Pasteurella multocida (strain Pm70).